A 144-amino-acid polypeptide reads, in one-letter code: Grifin (144 aa).

Residues 5–133 (SKAFCAGGLA…DHCLAQVELA (129 aa)) enclose the Galectin domain. Ser138 carries the phosphoserine modification.

In terms of assembly, homodimer. As to expression, not detected in lens.

This Homo sapiens (Human) protein is Grifin (GRIFIN).